Reading from the N-terminus, the 56-residue chain is Small ribosomal subunit protein bS21 (56 aa).

Belongs to the bacterial ribosomal protein bS21 family.

In Dictyoglomus thermophilum (strain ATCC 35947 / DSM 3960 / H-6-12), this protein is Small ribosomal subunit protein bS21.